The sequence spans 346 residues: Protein STAR1 (346 aa).

The tract at residues Gln23–Gly48 is disordered. The 233-residue stretch at Ile112–Glu344 folds into the ABC transporter domain. ATP is bound at residue Gly146–Ser153.

The protein belongs to the ABC transporter superfamily. ABCI family. In terms of assembly, interacts with STAR2. As to expression, expressed in roots.

It localises to the membrane. In terms of biological role, associates with STAR2 to form a functional transmembrane ABC transporter required for detoxification of aluminum (Al) in roots. Can specifically transport UDP-glucose. The protein is Protein STAR1 of Oryza sativa subsp. japonica (Rice).